The following is a 433-amino-acid chain: Nuclear distribution protein PAC1 (433 aa).

In terms of domain architecture, LisH spans 8–40; sequence QKDELHRAMLAYLHAAGMHNAYAALQHDAALAD. A coiled-coil region spans residues 57-84; that stretch reads SVIRLQKKVIDLENRNAALLAELAAAAR. WD repeat units lie at residues 103–144, 146–184, 188–227, 230–269, 272–336, 339–378, and 381–429; these read SHRA…RTLK, HTKA…TNVK, GHDH…CIKT, GHAE…TKME, GHEH…CLRT, GHDN…CTKT, and AHSH…QTIK.

This sequence belongs to the WD repeat LIS1/nudF family. In terms of assembly, self-associates. Interacts with NDL1 and dynein.

The protein localises to the cytoplasm. It is found in the cytoskeleton. Its subcellular location is the spindle pole. Functionally, positively regulates the activity of the minus-end directed microtubule motor protein dynein. Plays a central role in positioning the mitotic spindle at the bud neck during cell division. Targets cytoplasmic dynein to microtubule plus ends, thereby promoting dynein-mediated microtubule sliding along the bud cortex and consequently the movement of the mitotic spindle to the bud neck. This chain is Nuclear distribution protein PAC1, found in Cryptococcus neoformans var. neoformans serotype D (strain B-3501A) (Filobasidiella neoformans).